A 173-amino-acid polypeptide reads, in one-letter code: PTS system glucose-specific EIIA component (173 aa).

Residues 40-144 enclose the PTS EIIA type-1 domain; sequence DPTFAQKMMG…STVTPVVVTN (105 aa). Residues His77 and His92 each coordinate Zn(2+). His92 serves as the catalytic Tele-phosphohistidine intermediate; for EIIA activity. Phosphohistidine; by HPr is present on His92.

In terms of assembly, heterodimer with glycerol kinase (glpk). Zn(2+) is required as a cofactor.

The protein localises to the cytoplasm. The phosphoenolpyruvate-dependent sugar phosphotransferase system (sugar PTS), a major carbohydrate active transport system, catalyzes the phosphorylation of incoming sugar substrates concomitantly with their translocation across the cell membrane. The enzyme II complex composed of PtsG and Crr is involved in glucose transport. In Halalkalibacterium halodurans (strain ATCC BAA-125 / DSM 18197 / FERM 7344 / JCM 9153 / C-125) (Bacillus halodurans), this protein is PTS system glucose-specific EIIA component (crr).